The sequence spans 393 residues: Flap endonuclease 1 (393 aa).

The interval 1-108 is N-domain; sequence MGILGLSKLL…SELQERRQRA (108 aa). Residue Asp-34 participates in Mg(2+) binding. Arg-74 contributes to the DNA binding site. Positions 90, 162, 164, 183, and 185 each coordinate Mg(2+). The segment at 126–257 is I-domain; that stretch reads LMEKMSKRTV…QKAWEGIKKH (132 aa). Glu-162 is a DNA binding site. Residues Gly-235 and Asp-237 each contribute to the DNA site. Asp-237 contributes to the Mg(2+) binding site. The tract at residues 340 to 348 is interaction with PCNA; that stretch reads TQGRLDQFF.

Belongs to the XPG/RAD2 endonuclease family. FEN1 subfamily. In terms of assembly, interacts with PCNA. Three molecules of FEN1 bind to one PCNA trimer with each molecule binding to one PCNA monomer. PCNA stimulates the nuclease activity without altering cleavage specificity. Mg(2+) serves as cofactor. In terms of processing, phosphorylated. Phosphorylation upon DNA damage induces relocalization to the nuclear plasma.

Its subcellular location is the nucleus. The protein resides in the nucleolus. It localises to the nucleoplasm. The protein localises to the mitochondrion. Structure-specific nuclease with 5'-flap endonuclease and 5'-3' exonuclease activities involved in DNA replication and repair. During DNA replication, cleaves the 5'-overhanging flap structure that is generated by displacement synthesis when DNA polymerase encounters the 5'-end of a downstream Okazaki fragment. It enters the flap from the 5'-end and then tracks to cleave the flap base, leaving a nick for ligation. Also involved in the long patch base excision repair (LP-BER) pathway, by cleaving within the apurinic/apyrimidinic (AP) site-terminated flap. Acts as a genome stabilization factor that prevents flaps from equilibrating into structures that lead to duplications and deletions. Also possesses 5'-3' exonuclease activity on nicked or gapped double-stranded DNA, and exhibits RNase H activity. Also involved in replication and repair of rDNA and in repairing mitochondrial DNA. This chain is Flap endonuclease 1, found in Trypanosoma cruzi (strain CL Brener).